The following is a 219-amino-acid chain: N-(5'-phosphoribosyl)anthranilate isomerase (219 aa).

This sequence belongs to the TrpF family.

The catalysed reaction is N-(5-phospho-beta-D-ribosyl)anthranilate = 1-(2-carboxyphenylamino)-1-deoxy-D-ribulose 5-phosphate. The protein operates within amino-acid biosynthesis; L-tryptophan biosynthesis; L-tryptophan from chorismate: step 3/5. The protein is N-(5'-phosphoribosyl)anthranilate isomerase of Bordetella avium (strain 197N).